Reading from the N-terminus, the 360-residue chain is (+)-6a-hydroxymaackiain 3-O-methyltransferase 2 (360 aa).

Residues 202-205 (VAGG), aspartate 226, 226-227 (DQ), 246-247 (DM), and lysine 260 contribute to the S-adenosyl-L-methionine site. Residue histidine 264 is the Proton acceptor of the active site.

This sequence belongs to the class I-like SAM-binding methyltransferase superfamily. Cation-independent O-methyltransferase family. COMT subfamily.

It catalyses the reaction (+)-6a-hydroxymaackiain + S-adenosyl-L-methionine = (+)-pisatin + S-adenosyl-L-homocysteine + H(+). In terms of biological role, 3-O-methyltransferase involved in the phytoalexin pisatin biosynthesis. Can use (+)-6a-hydroxymaackiain, (+)-maackiain and with a lower activity (+)-medicarpin and 2,7,4'-trihydroxyisoflavanone as substrates, but not (-)-6a-hydroxymaackiain, daidzein, formononetin or isoliquiritigenin. This chain is (+)-6a-hydroxymaackiain 3-O-methyltransferase 2 (HMM2), found in Pisum sativum (Garden pea).